A 981-amino-acid polypeptide reads, in one-letter code: MDSAIDISSDSDVEIQETRTRPQHPPRIAEGSHRRDLSTLRPHFLSGSSSGANGHTKTGLTNLDSRNGFESKPLPRAEHHTHIPGNGSIVTSRIPNISVGDYEKFSSQQAFKRTHPPTFSRPPFPPRPDIGTSNGNASHFRGGAHDDLGMGRVTNGTRILPPSVAHGTSASPSHFNGLSDPMHRNGIGEERNSENDERLIYQAALQELNQPKSEVDLPAGLLSVPLMKHQKIALAWMFQKETNSLHCMGGILADDQGLGKTVSTIALILKQMHEAKLKSKNSGNQEAEALDLDADDESENAFEKPESKASNGSGVNGDSGIKKAKGEEASTSTRKFNRKRPAAGTLIVCPASVVRQWARELDEKVTDEAKLSVLIYHGGNRTKDPIELAKYDVVMTTYAIVSNEVPKQPLVDDDENDEKNSEKYGLASGFSINKKRKNVVGTTKKSKKKKGNNNAGDSSDPDSGTLAKVGWFRVVLDEAQTIKNHRTQVARACCGLRAKRRWCLSGTPIQNTIDDLYSYFRFLKYDPYAVYKSFCHQIKGPISRNSLQGYKKLQAVLRAIMLRRTKGTLLDGQPIINLPPKTINLSQVDFSVEERSFYVKLESDSRSQFKAYAAAGTLNQNYANILLMLLRLRQACDHPQLVKRYNSDSVGKVSEEAVKKLPKEDLVSLLSRLESSPICCVCHDPPEDPVVTLCGHIFCYQCVSDYITGDEDTCPAPRCREQLAHDVVFSKSTLRSCVADDLGCSSSEDNSHDKSVFQNGEFSSSKIKAVLDILQSLSNQGTSNSTQNGQMASSSQQPNDDDDDDDDDVTIVEKTSLKSTPSNGGPIKTIIFSQWTGMLDLVELSLIENSIEFRRLDGTMSLIARDRAVKEFSNDPDVKVMIMSLKAGNLGLNMIAACHVILLDLWWNPTTEDQAIDRAHRIGQTRPVTVTRITIKNTVEDRILALQEEKRKMVASAFGEDHGGSSATRLTVDDLKYLFMV.

Disordered regions lie at residues 1-66 (MDSA…LDSR) and 112-194 (KRTH…RNSE). A compositionally biased stretch (polar residues) spans 46-65 (SGSSSGANGHTKTGLTNLDS). Positions 119–128 (FSRPPFPPRP) are enriched in pro residues. Residues 166–176 (HGTSASPSHFN) show a composition bias toward polar residues. The segment covering 181–194 (PMHRNGIGEERNSE) has biased composition (basic and acidic residues). The 286-residue stretch at 241 to 526 (ETNSLHCMGG…YSYFRFLKYD (286 aa)) folds into the Helicase ATP-binding domain. 254 to 261 (DDQGLGKT) contributes to the ATP binding site. 2 disordered regions span residues 293-337 (DADD…RKFN) and 439-462 (VVGT…SDPD). The span at 439 to 451 (VVGTTKKSKKKKG) shows a compositional bias: basic residues. Residues 679 to 718 (CCVCHDPPEDPVVTLCGHIFCYQCVSDYITGDEDTCPAPR) form an RING-type; degenerate zinc finger. Residues 779–798 (NQGTSNSTQNGQMASSSQQP) are compositionally biased toward polar residues. The tract at residues 779–808 (NQGTSNSTQNGQMASSSQQPNDDDDDDDDD) is disordered. Residues 799–808 (NDDDDDDDDD) show a composition bias toward acidic residues. A Helicase C-terminal domain is found at 804–976 (DDDDDVTIVE…ATRLTVDDLK (173 aa)).

Belongs to the SNF2/RAD54 helicase family. RAD16 subfamily. Interacts with SUVR2.

The protein resides in the nucleus. Its function is as follows. Probable helicase-like transcription factor involved in transcriptional gene silencing. Associates with SUVR2 and contributes to transcriptional gene silencing at RNA-directed DNA methylation (RdDM) target loci but also at RdDM-independent target loci. May be involved in nucleosome positioning to form ordered nucleosome arrays on chromatin. Associates with SUVR2 and functions redundantly with FRG1. Required for the efficient methylation of a broad range of RdDM target loci. The sequence is that of Helicase-like transcription factor CHR28 from Arabidopsis thaliana (Mouse-ear cress).